Consider the following 319-residue polypeptide: Cytochrome f (319 aa).

The N-terminal stretch at 1–35 (MQNRNISYWIKKCVIQSISIVILMKIIAWPSISEA) is a signal peptide. 4 residues coordinate heme: Tyr36, Cys56, Cys59, and His60. A helical membrane pass occupies residues 285–305 (VQSLLVFFVSVTLAQIFLVLK).

Belongs to the cytochrome f family. As to quaternary structure, the 4 large subunits of the cytochrome b6-f complex are cytochrome b6, subunit IV (17 kDa polypeptide, petD), cytochrome f and the Rieske protein, while the 4 small subunits are PetG, PetL, PetM and PetN. The complex functions as a dimer. Requires heme as cofactor.

Its subcellular location is the plastid. The protein localises to the chloroplast thylakoid membrane. In terms of biological role, component of the cytochrome b6-f complex, which mediates electron transfer between photosystem II (PSII) and photosystem I (PSI), cyclic electron flow around PSI, and state transitions. In Physcomitrium patens (Spreading-leaved earth moss), this protein is Cytochrome f.